Reading from the N-terminus, the 228-residue chain is Aquaporin Z (228 aa).

Helical transmembrane passes span 1 to 21 (MLNK…GGCG) and 23 to 43 (AILA…ALAF). An NPA 1 motif is present at residues 63–65 (NPA). A run of 3 helical transmembrane segments spans residues 82–102 (IPYW…LYVI), 129–149 (MMAG…IILG), and 154–174 (LAPA…IHLV). The NPA 2 motif lies at 184-186 (NPA). Residues 205-225 (LFWVAPLVGAVIGAIIWKGLL) form a helical membrane-spanning segment.

It belongs to the MIP/aquaporin (TC 1.A.8) family. In terms of assembly, homotetramer.

The protein resides in the cell inner membrane. It catalyses the reaction H2O(in) = H2O(out). Channel that permits osmotically driven movement of water in both directions. It is involved in the osmoregulation and in the maintenance of cell turgor during volume expansion in rapidly growing cells. It mediates rapid entry or exit of water in response to abrupt changes in osmolarity. This chain is Aquaporin Z, found in Brucella abortus biovar 1 (strain 9-941).